Consider the following 155-residue polypeptide: 6,7-dimethyl-8-ribityllumazine synthase (155 aa).

Residues Phe24, 58–60, and 82–84 each bind 5-amino-6-(D-ribitylamino)uracil; these read AFE and VII. 87–88 contacts (2S)-2-hydroxy-3-oxobutyl phosphate; sequence ST. The active-site Proton donor is the His90. Phe115 lines the 5-amino-6-(D-ribitylamino)uracil pocket. (2S)-2-hydroxy-3-oxobutyl phosphate is bound at residue Arg129.

The protein belongs to the DMRL synthase family.

It carries out the reaction (2S)-2-hydroxy-3-oxobutyl phosphate + 5-amino-6-(D-ribitylamino)uracil = 6,7-dimethyl-8-(1-D-ribityl)lumazine + phosphate + 2 H2O + H(+). Its pathway is cofactor biosynthesis; riboflavin biosynthesis; riboflavin from 2-hydroxy-3-oxobutyl phosphate and 5-amino-6-(D-ribitylamino)uracil: step 1/2. In terms of biological role, catalyzes the formation of 6,7-dimethyl-8-ribityllumazine by condensation of 5-amino-6-(D-ribitylamino)uracil with 3,4-dihydroxy-2-butanone 4-phosphate. This is the penultimate step in the biosynthesis of riboflavin. This is 6,7-dimethyl-8-ribityllumazine synthase from Pelodictyon phaeoclathratiforme (strain DSM 5477 / BU-1).